The sequence spans 503 residues: Lysine--tRNA ligase (503 aa).

2 residues coordinate Mg(2+): Glu412 and Glu419.

The protein belongs to the class-II aminoacyl-tRNA synthetase family. In terms of assembly, homodimer. Requires Mg(2+) as cofactor.

The protein resides in the cytoplasm. It carries out the reaction tRNA(Lys) + L-lysine + ATP = L-lysyl-tRNA(Lys) + AMP + diphosphate. The protein is Lysine--tRNA ligase of Buchnera aphidicola subsp. Schizaphis graminum (strain Sg).